The sequence spans 355 residues: Beta-ketoacyl-[acyl-carrier-protein] synthase III 1 (355 aa).

Active-site residues include cysteine 122 and histidine 280. Positions 281 to 285 (QANER) are ACP-binding. Asparagine 311 is an active-site residue.

Belongs to the thiolase-like superfamily. FabH family. In terms of assembly, homodimer.

The protein resides in the cytoplasm. The enzyme catalyses malonyl-[ACP] + acetyl-CoA + H(+) = 3-oxobutanoyl-[ACP] + CO2 + CoA. It functions in the pathway lipid metabolism; fatty acid biosynthesis. Catalyzes the condensation reaction of fatty acid synthesis by the addition to an acyl acceptor of two carbons from malonyl-ACP. Catalyzes the first condensation reaction which initiates fatty acid synthesis and may therefore play a role in governing the total rate of fatty acid production. Possesses both acetoacetyl-ACP synthase and acetyl transacylase activities. Its substrate specificity determines the biosynthesis of branched-chain and/or straight-chain of fatty acids. The polypeptide is Beta-ketoacyl-[acyl-carrier-protein] synthase III 1 (Streptomyces avermitilis (strain ATCC 31267 / DSM 46492 / JCM 5070 / NBRC 14893 / NCIMB 12804 / NRRL 8165 / MA-4680)).